The primary structure comprises 267 residues: Thymidylate synthase (267 aa).

R25 provides a ligand contact to dUMP. Residue H55 coordinates (6R)-5,10-methylene-5,6,7,8-tetrahydrofolate. 130 to 131 is a binding site for dUMP; it reads RR. C150 functions as the Nucleophile in the catalytic mechanism. DUMP is bound by residues 170–173, N181, and 211–213; these read RSAD and HIY. D173 provides a ligand contact to (6R)-5,10-methylene-5,6,7,8-tetrahydrofolate. A266 contacts (6R)-5,10-methylene-5,6,7,8-tetrahydrofolate.

This sequence belongs to the thymidylate synthase family. Bacterial-type ThyA subfamily. Homodimer.

The protein resides in the cytoplasm. It carries out the reaction dUMP + (6R)-5,10-methylene-5,6,7,8-tetrahydrofolate = 7,8-dihydrofolate + dTMP. It functions in the pathway pyrimidine metabolism; dTTP biosynthesis. Catalyzes the reductive methylation of 2'-deoxyuridine-5'-monophosphate (dUMP) to 2'-deoxythymidine-5'-monophosphate (dTMP) while utilizing 5,10-methylenetetrahydrofolate (mTHF) as the methyl donor and reductant in the reaction, yielding dihydrofolate (DHF) as a by-product. This enzymatic reaction provides an intracellular de novo source of dTMP, an essential precursor for DNA biosynthesis. The protein is Thymidylate synthase of Corynebacterium efficiens (strain DSM 44549 / YS-314 / AJ 12310 / JCM 11189 / NBRC 100395).